The primary structure comprises 1058 residues: Carbamoyl phosphate synthase large chain (1058 aa).

A carboxyphosphate synthetic domain region spans residues 1-401 (MPKRTDIQKI…SLLKACRSLE (401 aa)). Residues Arg129, Arg169, Gly175, Gly176, Arg208, Ile210, Glu215, Gly241, Ile242, His243, Gln284, and Glu298 each coordinate ATP. An ATP-grasp 1 domain is found at 133 to 327 (KQLMEELEQP…IAKLAAKIAV (195 aa)). The Mg(2+) site is built by Gln284, Glu298, and Asn300. The Mn(2+) site is built by Gln284, Glu298, and Asn300. An oligomerization domain region spans residues 402–546 (IGVHHNEIPE…YSTYGWENES (145 aa)). Positions 547 to 929 (IRSDKESVLV…ALYKAFEASY (383 aa)) are carbamoyl phosphate synthetic domain. The region spanning 671 to 861 (EQALKELDIP…MAQVATKLIL (191 aa)) is the ATP-grasp 2 domain. Arg707, Ser746, Ile748, Glu752, Gly777, Val778, His779, Ser780, Gln820, and Glu832 together coordinate ATP. Positions 820, 832, and 834 each coordinate Mg(2+). Mn(2+) contacts are provided by Gln820, Glu832, and Asn834. Residues 930 to 1058 (LHLPTFGNVV…ESRSFVTEAI (129 aa)) form the MGS-like domain. Positions 930–1058 (LHLPTFGNVV…ESRSFVTEAI (129 aa)) are allosteric domain.

It belongs to the CarB family. As to quaternary structure, composed of two chains; the small (or glutamine) chain promotes the hydrolysis of glutamine to ammonia, which is used by the large (or ammonia) chain to synthesize carbamoyl phosphate. Tetramer of heterodimers (alpha,beta)4. Mg(2+) is required as a cofactor. Requires Mn(2+) as cofactor.

The catalysed reaction is hydrogencarbonate + L-glutamine + 2 ATP + H2O = carbamoyl phosphate + L-glutamate + 2 ADP + phosphate + 2 H(+). It carries out the reaction hydrogencarbonate + NH4(+) + 2 ATP = carbamoyl phosphate + 2 ADP + phosphate + 2 H(+). The protein operates within amino-acid biosynthesis; L-arginine biosynthesis; carbamoyl phosphate from bicarbonate: step 1/1. It functions in the pathway pyrimidine metabolism; UMP biosynthesis via de novo pathway; (S)-dihydroorotate from bicarbonate: step 1/3. Its function is as follows. Large subunit of the glutamine-dependent carbamoyl phosphate synthetase (CPSase). CPSase catalyzes the formation of carbamoyl phosphate from the ammonia moiety of glutamine, carbonate, and phosphate donated by ATP, constituting the first step of 2 biosynthetic pathways, one leading to arginine and/or urea and the other to pyrimidine nucleotides. The large subunit (synthetase) binds the substrates ammonia (free or transferred from glutamine from the small subunit), hydrogencarbonate and ATP and carries out an ATP-coupled ligase reaction, activating hydrogencarbonate by forming carboxy phosphate which reacts with ammonia to form carbamoyl phosphate. The polypeptide is Carbamoyl phosphate synthase large chain (Streptococcus pneumoniae (strain JJA)).